The primary structure comprises 275 residues: Voltage-dependent calcium channel gamma-5 subunit (275 aa).

A run of 4 helical transmembrane segments spans residues 8-28 (ALTLLSSVFAVCGLGLLGIAV), 103-123 (FPLVSLFFMFIGFILNNIGHI), 129-149 (ILAFVSGIFFILSGLSLVVGL), and 176-196 (GWSFAFAAISFLLTESAGVMS).

It belongs to the PMP-22/EMP/MP20 family. CACNG subfamily. In terms of assembly, the L-type calcium channel is composed of five subunits: alpha-1, alpha-2/delta, beta and gamma. Acts as an auxiliary subunit for AMPA-selective glutamate receptors (AMPARs). Found in a complex with GRIA1, GRIA2, GRIA3, GRIA4, CNIH2, CNIH3, CACNG2, CACNG3, CACNG4, CACNG7 and CACNG8. Interacts with GRIA1, GRIA2, GRIA3 and GRIA4.

The protein resides in the membrane. It is found in the postsynaptic density membrane. Its function is as follows. Regulates the gating properties of AMPA-selective glutamate receptors (AMPARs). Modulates their gating properties by accelerating their rates of activation, deactivation and desensitization. Displays subunit-specific AMPA receptor regulation. Shows specificity for GRIA1, GRIA4 and the long isoform of GRIA2. Thought to stabilize the calcium channel in an inactivated (closed) state. This Homo sapiens (Human) protein is Voltage-dependent calcium channel gamma-5 subunit (CACNG5).